We begin with the raw amino-acid sequence, 312 residues long: MGLCKCPKRKVTNLFCFEHRVNVCEHCLVANHAKCIVQSYLQWLQDSDYNPNCRLCNIPLAARETTRLICYDLFHWACLNERAAQLPRNTAPAGYQCPSCSGPIFPPTNLAGPVASALREKLATVNWARAGLGLPLIDELVSPEPEPLNTSEFSDWSSFNASGSPEQEETASASAAPAFYSQVPRPPASPSRPEQHTVIHMGNPEPLTHASAPRKVYDTRDDERAPGLHRDCDDDKYRRRPALGWLAQLLRSRAGSRKRPLTLLQRAGLLLLLGLLGFLALLALMSRLGRAAADSDPNLDPLMNPHIRVGPS.

The B box-type; degenerate zinc-finger motif lies at 1–43 (MGLCKCPKRKVTNLFCFEHRVNVCEHCLVANHAKCIVQSYLQW). The Cytoplasmic portion of the chain corresponds to 1–268 (MGLCKCPKRK…RPLTLLQRAG (268 aa)). The RING-type; degenerate zinc finger occupies 53–101 (CRLCNIPLAARETTRLICYDLFHWACLNERAAQLPRNTAPAGYQCPSCS). The segment at 144–233 (EPEPLNTSEF…RAPGLHRDCD (90 aa)) is disordered. A compositionally biased stretch (polar residues) spans 148 to 173 (LNTSEFSDWSSFNASGSPEQEETASA). Residues 215–233 (KVYDTRDDERAPGLHRDCD) show a composition bias toward basic and acidic residues. Residues 269 to 289 (LLLLLGLLGFLALLALMSRLG) form a helical membrane-spanning segment. Residues 290 to 312 (RAAADSDPNLDPLMNPHIRVGPS) lie on the Lumenal side of the membrane.

This sequence belongs to the ZFPL1 family. In terms of assembly, interacts with GOLGA2/GM130. In terms of processing, phosphorylated.

The protein localises to the golgi apparatus. Its subcellular location is the cis-Golgi network membrane. Required for cis-Golgi integrity and efficient ER to Golgi transport. Involved in the maintenance of the integrity of the cis-Golgi, possibly via its interaction with GOLGA2/GM130. The chain is Zinc finger protein-like 1 (ZFPL1) from Bos taurus (Bovine).